A 64-amino-acid polypeptide reads, in one-letter code: Large ribosomal subunit protein bL33c (64 aa).

It belongs to the bacterial ribosomal protein bL33 family.

Its subcellular location is the plastid. The protein resides in the chloroplast. The polypeptide is Large ribosomal subunit protein bL33c (Phaeodactylum tricornutum (strain CCAP 1055/1)).